Here is a 341-residue protein sequence, read N- to C-terminus: Adenylosuccinate synthetase (341 aa).

Residues 12–18 and 42–44 contribute to the GTP site; these read GDEGKGK and GHS. D13 serves as the catalytic Proton acceptor. Positions 13 and 42 each coordinate Mg(2+). IMP contacts are provided by residues 13 to 16, 40 to 43, T127, R141, Q179, T194, and R256; these read DEGK and NAGH. H43 acts as the Proton donor in catalysis. 252-258 provides a ligand contact to substrate; the sequence is VVTGRKR. Residues R258, 284-286, and 324-326 contribute to the GTP site; these read CID and STG.

It belongs to the adenylosuccinate synthetase family. As to quaternary structure, homodimer. Requires Mg(2+) as cofactor.

It localises to the cytoplasm. It carries out the reaction IMP + L-aspartate + GTP = N(6)-(1,2-dicarboxyethyl)-AMP + GDP + phosphate + 2 H(+). The protein operates within purine metabolism; AMP biosynthesis via de novo pathway; AMP from IMP: step 1/2. Plays an important role in the de novo pathway of purine nucleotide biosynthesis. Catalyzes the first committed step in the biosynthesis of AMP from IMP. The sequence is that of Adenylosuccinate synthetase from Methanosphaera stadtmanae (strain ATCC 43021 / DSM 3091 / JCM 11832 / MCB-3).